Consider the following 387-residue polypeptide: Succinate--CoA ligase [ADP-forming] subunit beta (387 aa).

Residues 9 to 236 (KELFAKHNVP…RAATDPLELK (228 aa)) form the ATP-grasp domain. Residues K45, 52–54 (GRG), S94, and E99 each bind ATP. Mg(2+) contacts are provided by N191 and D205. Substrate contacts are provided by residues N256 and 318 to 320 (GIT).

It belongs to the succinate/malate CoA ligase beta subunit family. In terms of assembly, heterotetramer of two alpha and two beta subunits. Requires Mg(2+) as cofactor.

It catalyses the reaction succinate + ATP + CoA = succinyl-CoA + ADP + phosphate. It carries out the reaction GTP + succinate + CoA = succinyl-CoA + GDP + phosphate. The protein operates within carbohydrate metabolism; tricarboxylic acid cycle; succinate from succinyl-CoA (ligase route): step 1/1. Succinyl-CoA synthetase functions in the citric acid cycle (TCA), coupling the hydrolysis of succinyl-CoA to the synthesis of either ATP or GTP and thus represents the only step of substrate-level phosphorylation in the TCA. The beta subunit provides nucleotide specificity of the enzyme and binds the substrate succinate, while the binding sites for coenzyme A and phosphate are found in the alpha subunit. This is Succinate--CoA ligase [ADP-forming] subunit beta from Mycobacterium tuberculosis (strain CDC 1551 / Oshkosh).